An 89-amino-acid polypeptide reads, in one-letter code: Large ribosomal subunit protein bL27 (89 aa).

The tract at residues 1 to 24 (MAHKKGTGSTRNGRDSNSKRLGVK) is disordered.

This sequence belongs to the bacterial ribosomal protein bL27 family.

This chain is Large ribosomal subunit protein bL27, found in Synechococcus sp. (strain WH7803).